We begin with the raw amino-acid sequence, 710 residues long: Secretin OutD (710 aa).

Residues 1–27 form the signal peptide; sequence MLGKGIKKSWGWLGLTVLLLGSPCGWA. An N0 region spans residues 28 to 105; that stretch reads AEFSASFKGT…DNGVLKVIRS (78 aa). An N1 region spans residues 123-190; that stretch reads IGDELVTRVV…DIVNTVDKTG (68 aa). Residues 192-262 are N2; sequence REMVTVPLTY…VEMIRQLDRK (71 aa). Positions 288–399 are N3; it reads GNGTSGNRNS…INQLDIRRPQ (112 aa). Residues 289 to 353 are disordered; sequence NGTSGNRNSS…AFGSTSSSGG (65 aa). Positions 401-648 are secretin; sequence LVEAIIAEIQ…MLFLRPTIIR (248 aa). Residues 691-710 are s domain; sequence TYTFRQVQSSISDFYKPEGR.

The protein belongs to the bacterial secretin family. GSP D subfamily. As to quaternary structure, forms a cylindrical channel with 15 subunits. Interacts with pilotin OutS.

The protein resides in the cell outer membrane. Functionally, involved in a type II secretion system (T2SS, formerly general secretion pathway, GSP) for the export of proteins. Required for the translocation of the multiple pectic enzymes. This subunit forms the outer membrane channel. The polypeptide is Secretin OutD (outD) (Dickeya dadantii (strain 3937) (Erwinia chrysanthemi (strain 3937))).